Consider the following 258-residue polypeptide: Acyl-[acyl-carrier-protein]--UDP-N-acetylglucosamine O-acyltransferase (258 aa).

It belongs to the transferase hexapeptide repeat family. LpxA subfamily. In terms of assembly, homotrimer.

Its subcellular location is the cytoplasm. The catalysed reaction is a (3R)-hydroxyacyl-[ACP] + UDP-N-acetyl-alpha-D-glucosamine = a UDP-3-O-[(3R)-3-hydroxyacyl]-N-acetyl-alpha-D-glucosamine + holo-[ACP]. It functions in the pathway glycolipid biosynthesis; lipid IV(A) biosynthesis; lipid IV(A) from (3R)-3-hydroxytetradecanoyl-[acyl-carrier-protein] and UDP-N-acetyl-alpha-D-glucosamine: step 1/6. Functionally, involved in the biosynthesis of lipid A, a phosphorylated glycolipid that anchors the lipopolysaccharide to the outer membrane of the cell. The protein is Acyl-[acyl-carrier-protein]--UDP-N-acetylglucosamine O-acyltransferase of Neisseria meningitidis serogroup A / serotype 4A (strain DSM 15465 / Z2491).